The sequence spans 233 residues: MPYEPPTHTVERSLRATTGAKIIAGVDEVGRGAWAGPVTVCAAITGLRRPPVGLTDSKLLTIKRRTELEVELRTWVTSYALGHASPEEIDAMGMTAALRLAAVRALGTLPVRPDAVILDGKHDYLGAPWRVRTVIKGDQSCIAVAAASVLAKVQRDKMMAELGVDHADFGFADNAGYPSPVHKAALEERGPTPHHRLSWAYLDALPQWRHLKKVRSWVEGSVPEIEGQLGFDF.

One can recognise an RNase H type-2 domain in the interval 21–211; it reads KIIAGVDEVG…LDALPQWRHL (191 aa). Positions 27, 28, and 119 each coordinate a divalent metal cation.

Belongs to the RNase HII family. Mn(2+) serves as cofactor. Mg(2+) is required as a cofactor.

The protein resides in the cytoplasm. The catalysed reaction is Endonucleolytic cleavage to 5'-phosphomonoester.. Its function is as follows. Endonuclease that specifically degrades the RNA of RNA-DNA hybrids. This Streptomyces coelicolor (strain ATCC BAA-471 / A3(2) / M145) protein is Ribonuclease HII (rnhB).